Here is a 206-residue protein sequence, read N- to C-terminus: MMKAILATLAIFGCIWPGQSVMFHLTPNTQKCLKEDIQANQMVMGEYEVSDVPGQVIDFIVRDTKGHILSQKEHITKAKFSFMSEVYDSYEICFISKVPPHQRGIAQQVALTTKKGVETKNYEGIGEASKLKPLEVDLKRLEDLSDSIVRDFVMMRKREEEMRDTNEKTNSRVLFFSIFSMCCLLGLATWQVLYLRRYFKAKKLIE.

Residues 1–20 (MMKAILATLAIFGCIWPGQS) form the signal peptide. Residues 21 to 172 (VMFHLTPNTQ…RDTNEKTNSR (152 aa)) lie on the Lumenal side of the membrane. Residues 30 to 140 (QKCLKEDIQA…LKPLEVDLKR (111 aa)) form the GOLD domain. Residues 173 to 193 (VLFFSIFSMCCLLGLATWQVL) form a helical membrane-spanning segment. Topologically, residues 194-206 (YLRRYFKAKKLIE) are cytoplasmic.

Belongs to the EMP24/GP25L family.

The protein localises to the membrane. Functionally, eca and bai are essential, though not redundant, for dorsoventral patterning of the embryo. Specifically required during early embryogenesis for the activity of maternal tkv, while the zygotic tkv is not affected. This chain is Transmembrane emp24 domain-containing protein bai, found in Drosophila willistoni (Fruit fly).